Here is a 266-residue protein sequence, read N- to C-terminus: Arcelin-4 (266 aa).

Residues 1–21 (MGSSKLLSLALLLVLLTHANS) form the signal peptide. Residues asparagine 28 and asparagine 92 are each glycosylated (N-linked (GlcNAc...) asparagine).

Belongs to the leguminous lectin family.

Functionally, seed storage. This carbohydrate-binding lectin has toxic effects on the important bean bruchid pests, Z.subfasciatus and A.obtectus. The protein is Arcelin-4 (ARC4) of Phaseolus vulgaris (Kidney bean).